Consider the following 121-residue polypeptide: Small ribosomal subunit protein bS6 (121 aa).

It belongs to the bacterial ribosomal protein bS6 family.

Its function is as follows. Binds together with bS18 to 16S ribosomal RNA. The chain is Small ribosomal subunit protein bS6 from Rickettsia peacockii (strain Rustic).